The chain runs to 316 residues: 2,3-dihydroxyphenylpropionate/2,3-dihydroxicinnamic acid 1,2-dioxygenase (316 aa).

Residue histidine 115 is the Proton donor of the active site. Histidine 180 (proton acceptor) is an active-site residue.

The protein belongs to the LigB/MhpB extradiol dioxygenase family. In terms of assembly, homotetramer. The cofactor is Fe(2+).

It carries out the reaction 3-(2,3-dihydroxyphenyl)propanoate + O2 = (2Z,4E)-2-hydroxy-6-oxonona-2,4-dienedioate + H(+). The enzyme catalyses (2E)-3-(2,3-dihydroxyphenyl)prop-2-enoate + O2 = (2Z,4E,7E)-2-hydroxy-6-oxonona-2,4,7-trienedioate + H(+). Its pathway is aromatic compound metabolism; 3-phenylpropanoate degradation. Its function is as follows. Catalyzes the non-heme iron(II)-dependent oxidative cleavage of 2,3-dihydroxyphenylpropionic acid and 2,3-dihydroxicinnamic acid into 2-hydroxy-6-ketononadienedioate and 2-hydroxy-6-ketononatrienedioate, respectively. The sequence is that of 2,3-dihydroxyphenylpropionate/2,3-dihydroxicinnamic acid 1,2-dioxygenase from Rhodococcus rhodochrous.